Reading from the N-terminus, the 443-residue chain is Thymidine phosphorylase (443 aa).

It belongs to the thymidine/pyrimidine-nucleoside phosphorylase family. As to quaternary structure, homodimer.

The catalysed reaction is thymidine + phosphate = 2-deoxy-alpha-D-ribose 1-phosphate + thymine. The protein operates within pyrimidine metabolism; dTMP biosynthesis via salvage pathway; dTMP from thymine: step 1/2. The enzymes which catalyze the reversible phosphorolysis of pyrimidine nucleosides are involved in the degradation of these compounds and in their utilization as carbon and energy sources, or in the rescue of pyrimidine bases for nucleotide synthesis. The polypeptide is Thymidine phosphorylase (Shewanella baltica (strain OS185)).